Here is a 231-residue protein sequence, read N- to C-terminus: Allergen Ani s 10 (231 aa).

The signal sequence occupies residues 1-19; sequence MHLITALVLLLQLIHFITS. Repeat copies occupy residues 28–56, 57–85, 86–114, 115–143, 144–172, 173–201, and 204–231. The segment at 28 to 201 is 6 X 29 AA tandem repeats of [EG]-G-P-G-P-V-[IV]-[SG]-G-S-G-I-G-[ND]-V-W-[NE]-K-A-N-E-[QP]-A-[AE]-[QEH]-Q-[EQ]-[NS]-I; it reads GGPGPVVGGS…NEQAAEQQNI (174 aa). Disordered regions lie at residues 107 to 126 and 134 to 231; these read QAAH…GSGI and NEQA…SMQA. 3 stretches are compositionally biased toward low complexity: residues 114-123, 143-152, and 177-187; these read IEGPGPVVSG and PVISGSGIGNV.

This is Allergen Ani s 10 from Anisakis simplex (Herring worm).